The primary structure comprises 310 residues: Olfactory receptor 8I2 (310 aa).

The Extracellular segment spans residues 1–25; that stretch reads MAGNNFTEVTVFILSGFANHPELQV. N-linked (GlcNAc...) asparagine glycosylation is present at Asn5. A helical transmembrane segment spans residues 26–46; that stretch reads SLFLMFLFIYLFTVLGNLGLI. Residues 47-54 lie on the Cytoplasmic side of the membrane; sequence TLIRMDSQ. A helical transmembrane segment spans residues 55–75; it reads LHTPMYFFLSNLAFIDIFYSS. Topologically, residues 76 to 99 are extracellular; that stretch reads TVTPKALVNFQSNRRSISFVGCFV. Cys97 and Cys188 are oxidised to a cystine. A helical membrane pass occupies residues 100 to 120; the sequence is QMYFFVGLVCCECFLLGSMAY. The Cytoplasmic segment spans residues 121–139; it reads NRYIAICNPLLYSVVMSQK. The chain crosses the membrane as a helical span at residues 140–160; it reads VSNWLGVMPYVIGFTSSLISV. Over 161 to 196 the chain is Extracellular; it reads WVISSLAFCDSSINHFFCDTTALLALSCVDTFGTEM. Residues 197–216 traverse the membrane as a helical segment; sequence VSFVLAGFTLLSSLLIITVT. Topologically, residues 217 to 236 are cytoplasmic; the sequence is YIIIISAILRIQSAAGRQKA. The chain crosses the membrane as a helical span at residues 237–257; sequence FSTCASHLMAVTIFYGSLIFT. Residues 258–270 are Extracellular-facing; it reads YLQPDNTSSLTQA. Residues 271–291 form a helical membrane-spanning segment; it reads QVASVFYTIVIPMLNPLIYSL. Residues 292–310 are Cytoplasmic-facing; it reads RNKDVKNALLRVIHRKLFP.

The protein belongs to the G-protein coupled receptor 1 family.

Its subcellular location is the cell membrane. In terms of biological role, odorant receptor. This is Olfactory receptor 8I2 (OR8I2) from Homo sapiens (Human).